A 181-amino-acid polypeptide reads, in one-letter code: MIKEVIVVEGRDDITAVKRAVDAEMIAVGGFGINSKVIKKIREAQKRQGVIVLTDPDYAGEKIRKYICNRVKGVKHAYISQEEGTKEDDIGVENAAPEAIIRALNLAKCEVKQERKEFDMNDMIFFKLTANEESKERREKLGMALGIGYCNTNQFIKRLNNFGITKEEFIKAIKDLDKGNE.

Residues 3–86 (KEVIVVEGRD…AYISQEEGTK (84 aa)) enclose the Toprim domain. Glutamate 9, aspartate 55, and aspartate 57 together coordinate Mg(2+).

Belongs to the ribonuclease M5 family. Mg(2+) serves as cofactor.

Its subcellular location is the cytoplasm. The enzyme catalyses Endonucleolytic cleavage of RNA, removing 21 and 42 nucleotides, respectively, from the 5'- and 3'-termini of a 5S-rRNA precursor.. Its function is as follows. Required for correct processing of both the 5' and 3' ends of 5S rRNA precursor. Cleaves both sides of a double-stranded region yielding mature 5S rRNA in one step. This is Ribonuclease M5 from Clostridium botulinum (strain Hall / ATCC 3502 / NCTC 13319 / Type A).